Consider the following 205-residue polypeptide: Cytochrome c biogenesis ATP-binding export protein CcmA 1 (205 aa).

Residues 2–205 enclose the ABC transporter domain; it reads LEARDLYCER…LALTGGEAGL (204 aa). 34-41 provides a ligand contact to ATP; sequence GGNGAGKT.

Belongs to the ABC transporter superfamily. CcmA exporter (TC 3.A.1.107) family. As to quaternary structure, the complex is composed of two ATP-binding proteins (CcmA) and two transmembrane proteins (CcmB).

The protein resides in the cell inner membrane. It catalyses the reaction heme b(in) + ATP + H2O = heme b(out) + ADP + phosphate + H(+). In terms of biological role, part of the ABC transporter complex CcmAB involved in the biogenesis of c-type cytochromes; once thought to export heme, this seems not to be the case, but its exact role is uncertain. Responsible for energy coupling to the transport system. This is Cytochrome c biogenesis ATP-binding export protein CcmA 1 from Salmonella paratyphi A (strain ATCC 9150 / SARB42).